The primary structure comprises 132 residues: Small ribosomal subunit protein uS8 (132 aa).

Belongs to the universal ribosomal protein uS8 family. As to quaternary structure, part of the 30S ribosomal subunit. Contacts proteins S5 and S12.

Functionally, one of the primary rRNA binding proteins, it binds directly to 16S rRNA central domain where it helps coordinate assembly of the platform of the 30S subunit. This is Small ribosomal subunit protein uS8 from Acidobacterium capsulatum (strain ATCC 51196 / DSM 11244 / BCRC 80197 / JCM 7670 / NBRC 15755 / NCIMB 13165 / 161).